The primary structure comprises 531 residues: Probable peptide ABC transporter periplasmic-binding protein y4tO (531 aa).

Positions 1 to 32 (MTISRRDLFKAGLAAGAALSVPSLLRAQTAVA) form a signal peptide, tat-type signal.

The protein belongs to the bacterial solute-binding protein 5 family. Post-translationally, predicted to be exported by the Tat system. The position of the signal peptide cleavage has not been experimentally proven.

The protein resides in the periplasm. Its function is as follows. Probably part of the binding-protein-dependent transport system y4tOPQRS for a peptide. The polypeptide is Probable peptide ABC transporter periplasmic-binding protein y4tO (Sinorhizobium fredii (strain NBRC 101917 / NGR234)).